A 247-amino-acid polypeptide reads, in one-letter code: UPF0280 protein MmarC7_0482 (247 aa).

This sequence belongs to the UPF0280 family.

The protein is UPF0280 protein MmarC7_0482 of Methanococcus maripaludis (strain C7 / ATCC BAA-1331).